We begin with the raw amino-acid sequence, 267 residues long: tRNA pseudouridine synthase A (267 aa).

Residue Asp-55 is the Nucleophile of the active site. Substrate is bound at residue Tyr-111.

The protein belongs to the tRNA pseudouridine synthase TruA family.

The enzyme catalyses uridine(38/39/40) in tRNA = pseudouridine(38/39/40) in tRNA. Its function is as follows. Formation of pseudouridine at positions 38, 39 and 40 in the anticodon stem and loop of transfer RNAs. The polypeptide is tRNA pseudouridine synthase A (Thermococcus onnurineus (strain NA1)).